Consider the following 258-residue polypeptide: MILNRLSTLGIITFGMLSFAANSAQPDIKFASKEYGVTIGESRIIYPLDAAGVMVSVKNTQDYPVLIQSRIYDENKEKESEDPFVVTPPLFRLDAKQQNSLRIAQAGGVFPRDKESLKWLCVKGIPPKDEDIWVDDATNKQKFNPDKDVGVFVQFAINNCIKLLVRPNELKGTPIQFAENLSWKVDGGKLIAENPSPFYMNIGELTFGGKSIPSHYIPPKSTWAFDLPKGLAGARNVSWRIINDQGGLDRLYSKNVTL.

An N-terminal signal peptide occupies residues 1–20 (MILNRLSTLGIITFGMLSFA). C121 and C160 are disulfide-bonded.

It belongs to the periplasmic pilus chaperone family.

Its subcellular location is the periplasm. Its function is as follows. Has a stimulatory role for the envelope antigen F1 secretion. It seems to interact with the subunit polypeptide and to prevent it from digestion by a protease. This chain is Chaperone protein caf1M (caf1M), found in Yersinia pestis.